The primary structure comprises 346 residues: UDP-N-acetylenolpyruvoylglucosamine reductase (346 aa).

The region spanning 18–189 (LRAQARAFIA…VSVVFALKTH (172 aa)) is the FAD-binding PCMH-type domain. The active site involves Arg165. Ser240 acts as the Proton donor in catalysis. Glu336 is an active-site residue.

The protein belongs to the MurB family. The cofactor is FAD.

The protein localises to the cytoplasm. The enzyme catalyses UDP-N-acetyl-alpha-D-muramate + NADP(+) = UDP-N-acetyl-3-O-(1-carboxyvinyl)-alpha-D-glucosamine + NADPH + H(+). The protein operates within cell wall biogenesis; peptidoglycan biosynthesis. In terms of biological role, cell wall formation. This is UDP-N-acetylenolpyruvoylglucosamine reductase from Neisseria meningitidis serogroup C (strain 053442).